The primary structure comprises 478 residues: Glycogen synthase (478 aa).

K15 is a binding site for ADP-alpha-D-glucose.

This sequence belongs to the glycosyltransferase 1 family. Bacterial/plant glycogen synthase subfamily.

The catalysed reaction is [(1-&gt;4)-alpha-D-glucosyl](n) + ADP-alpha-D-glucose = [(1-&gt;4)-alpha-D-glucosyl](n+1) + ADP + H(+). The protein operates within glycan biosynthesis; glycogen biosynthesis. Functionally, synthesizes alpha-1,4-glucan chains using ADP-glucose. This Clostridium botulinum (strain Eklund 17B / Type B) protein is Glycogen synthase.